The following is a 461-amino-acid chain: Putative cytochrome P450 132 (461 aa).

Cys-409 contributes to the heme binding site.

Belongs to the cytochrome P450 family. It depends on heme as a cofactor.

The sequence is that of Putative cytochrome P450 132 (cyp132) from Mycobacterium bovis (strain ATCC BAA-935 / AF2122/97).